We begin with the raw amino-acid sequence, 253 residues long: Toxin PezT (253 aa).

39 to 46 (GQSGAGKT) is an ATP binding site. Catalysis depends on D66, which acts as the Proton acceptor.

The protein belongs to the zeta toxin family. As to quaternary structure, forms a PezA(2)PezT(2) heterotetramer. The heterotetramer is much more stable than either of the proteins alone, and a specific mechanism may be necessary to liberate the toxin.

The enzyme catalyses UDP-N-acetyl-alpha-D-glucosamine + ATP = UDP-N-acetyl-alpha-D-glucosamine 3'-phosphate + ADP + H(+). Its function is as follows. Toxic component of a type II toxin-antitoxin (TA) system. Phosphorylates UDP-N-acetyl-D-glucosamine (UNAG) on the 3'-hydroxyl group of the N-acetyl-D-glucosamine moiety, yielding UNAG-3P. UNAG-3P inhibits MurA, the first committed step in cell wall synthesis, which is then blocked. Upon expression in E.coli results in decreased cell growth and viability, followed 3 hours later by growth restoration; the toxic effect and phosphorylation of UNAG are neutralized by coexpression with cognate antitoxin PezA. A mutant lacking the last 11 residues is stably maintained in E.coli, unlike the wild-type which undergoes spontaneous mutation. Expression of the deletion mutant in rapidly growing liquid cultures leads to cell bulging, permeabilization and massive lysis by 1 hour. Cells that survive are not able to undergo cytokinesis. Expression in slowly growing cells leads to bulging but not lysis. Functionally, acts as a corepressor of its own operon with PezA; it is not clear if it binds DNA alone. This chain is Toxin PezT (pezT), found in Streptococcus pneumoniae serotype 4 (strain ATCC BAA-334 / TIGR4).